We begin with the raw amino-acid sequence, 221 residues long: 21 kDa seed protein (221 aa).

An N-terminal signal peptide occupies residues 1–26 (MKTATAVVLLLFAFTSKSYFFGVANA). Cysteines 69 and 116 form a disulfide.

It belongs to the protease inhibitor I3 (leguminous Kunitz-type inhibitor) family.

This is 21 kDa seed protein (ASP) from Theobroma cacao (Cacao).